Here is a 120-residue protein sequence, read N- to C-terminus: UPF0102 protein Moth_0988 (120 aa).

It belongs to the UPF0102 family.

The chain is UPF0102 protein Moth_0988 from Moorella thermoacetica (strain ATCC 39073 / JCM 9320).